The chain runs to 77 residues: Exodeoxyribonuclease 7 small subunit (77 aa).

The protein belongs to the XseB family. In terms of assembly, heterooligomer composed of large and small subunits.

Its subcellular location is the cytoplasm. The enzyme catalyses Exonucleolytic cleavage in either 5'- to 3'- or 3'- to 5'-direction to yield nucleoside 5'-phosphates.. In terms of biological role, bidirectionally degrades single-stranded DNA into large acid-insoluble oligonucleotides, which are then degraded further into small acid-soluble oligonucleotides. In Carboxydothermus hydrogenoformans (strain ATCC BAA-161 / DSM 6008 / Z-2901), this protein is Exodeoxyribonuclease 7 small subunit.